The following is a 267-amino-acid chain: Undecaprenyl-diphosphatase (267 aa).

The next 8 helical transmembrane spans lie at 1 to 21 (MSELQIVVLALIQGLTEFLPI), 39 to 59 (QGLAFDLILNIGTLSAVLIYF), 87 to 107 (WWILWSTIPAALIGFFGKSLV), 113 to 133 (SGYVIAVTTTVFGLLLWWADA), 144 to 164 (TGLKGALFIGFAQVLALIPGT), 189 to 209 (FLMSIPIIAMASGYDLLKFIL), 219 to 239 (LFLGAGISFVSAILCIHVFLI), and 244 to 264 (VGMMPFVIYRLLLGGFLFYIL).

The protein belongs to the UppP family.

It is found in the cell inner membrane. The enzyme catalyses di-trans,octa-cis-undecaprenyl diphosphate + H2O = di-trans,octa-cis-undecaprenyl phosphate + phosphate + H(+). Functionally, catalyzes the dephosphorylation of undecaprenyl diphosphate (UPP). Confers resistance to bacitracin. This Psychromonas ingrahamii (strain DSM 17664 / CCUG 51855 / 37) protein is Undecaprenyl-diphosphatase.